The sequence spans 373 residues: Polygalacturonase (373 aa).

The first 24 residues, 1 to 24, serve as a signal peptide directing secretion; it reads MVRNIVSRLCSQLFALPSSSLQER. An intrachain disulfide couples Cys27 to Cys42. Residues Asn65 and Asn94 are each glycosylated (N-linked (GlcNAc...) asparagine). PbH1 repeat units lie at residues 136–158, 159–197, 198–219, 220–240, 249–270, 278–300, 312–333, and 345–369; these read TGNS…DITG, SSQL…DISS, SDHV…AVTS, GTNI…SIGS, VDGV…RIKS, INNV…DVQQ, TNGV…ASSA, and CSGF…YPTN. Residue Asp212 is the Proton donor of the active site. A disulfide bond links Cys214 and Cys230. His234 is an active-site residue. 2 N-linked (GlcNAc...) asparagine glycosylation sites follow: Asn280 and Asn290. 2 disulfide bridges follow: Cys340/Cys345 and Cys364/Cys371.

It belongs to the glycosyl hydrolase 28 family.

The protein resides in the secreted. It carries out the reaction (1,4-alpha-D-galacturonosyl)n+m + H2O = (1,4-alpha-D-galacturonosyl)n + (1,4-alpha-D-galacturonosyl)m.. Involved in maceration and soft-rotting of plant tissue. Hydrolyzes the 1,4-alpha glycosidic bonds of de-esterified pectate in the smooth region of the plant cell wall. The polypeptide is Polygalacturonase (PGA) (Fusarium fujikuroi (Bakanae and foot rot disease fungus)).